The following is a 530-amino-acid chain: Chitin synthase 1 (530 aa).

The N-linked (GlcNAc...) asparagine glycan is linked to N17. The interval 22-94 (QESSSNLIQQ…QANNNRKVTR (73 aa)) is disordered. A compositionally biased stretch (polar residues) spans 24 to 56 (SSSNLIQQQQPGTNYARNQQTLSSLRSQKQQAE). Residues N118, N310, and N474 are each glycosylated (N-linked (GlcNAc...) asparagine). A run of 2 helical transmembrane segments spans residues 477 to 497 (FFAG…GHGF) and 508 to 528 (IYNV…LSFL).

This sequence belongs to the chitin synthase family. Class II subfamily.

It localises to the cell membrane. The enzyme catalyses [(1-&gt;4)-N-acetyl-beta-D-glucosaminyl](n) + UDP-N-acetyl-alpha-D-glucosamine = [(1-&gt;4)-N-acetyl-beta-D-glucosaminyl](n+1) + UDP + H(+). Its function is as follows. Polymerizes chitin, a structural polymer of the cell wall and septum, by transferring the sugar moiety of UDP-GlcNAc to the non-reducing end of the growing chitin polymer. In Rhizopus delemar (strain RA 99-880 / ATCC MYA-4621 / FGSC 9543 / NRRL 43880) (Mucormycosis agent), this protein is Chitin synthase 1.